Consider the following 873-residue polypeptide: Programmed cell death 6-interacting protein (873 aa).

An N-acetylalanine modification is found at alanine 2. In terms of domain architecture, BRO1 spans 3–397 (SFIWVQLKKT…AQMREATTLA (395 aa)). Residues 176–508 (TVDISPDTVG…KFRAVLDKAV (333 aa)) form an interaction with CHMP4A, CHMP4B and CHMP4C region. Lysine 215 carries the post-translational modification N6-acetyllysine. An interaction with SDCBP region spans residues 423–873 (LTKSTAVVEQ…PPQQSYYPQQ (451 aa)). A Phosphothreonine modification is found at threonine 484. At serine 486 the chain carries Phosphoserine. A self-association region spans residues 508-873 (VQADGQVKER…PPQQSYYPQQ (366 aa)). Disordered regions lie at residues 719–808 (AREP…GPPY) and 837–873 (PYPPVYHQSPGQAPYPGPQQPTYPFPQPPQQSYYPQQ). Residues 722–725 (PSAP) form an interaction with TSG101 region. Serine 735 carries the post-translational modification Phosphoserine. 2 positions are modified to phosphothreonine: threonine 742 and threonine 745. The span at 745 to 767 (TPAPRTMPPAKPQPPARPPPPVL) shows a compositional bias: pro residues. Arginine 749 carries the omega-N-methylarginine modification. The span at 768–791 (PANRVPPAAAATAPAGVGTASAAP) shows a compositional bias: low complexity. Composition is skewed to pro residues over residues 792 to 808 (PQTPGSAPPPQAQGPPY) and 849 to 865 (APYPGPQQPTYPFPQPP). An interaction with CEP55 region spans residues 802–811 (QAQGPPYPTY).

In terms of assembly, self-associates. Interacts with SH3KBP1. Interacts with PDCD6 in a calcium-dependent manner. Interacts with TSG101 in a calcium-dependent manner; PDCD6IP homooligomerization may be required for TSG101-binding. Interacts with SGSM3. Directly interacts with CHMP4A, CHMP4B and CHMP4C. Directly interacts with CEP55 in a 1:2 stoechiometry; this interaction is required for PDCD6IP targeting to the midbody. May interact with PDGFRB. Interacts with SH3GL1 and SH3GL2/endophilin-1. Forms a complex with SDCBP and SDC2. Found in a complex with F-actin, TJP1/ZO-1 and PARD3. Interacts with CD2AP. Interacts with ARRDC1. Interacts (via BRO1 domain) with the ATG12-ATG3 conjugate; this interaction is bridged by ATG12 and promotes multiple PDCD6IP-mediated functions such as endolysosomal trafficking, macroautophagy and exosome biogenesis. Post-translationally, may be phosphorylated on tyrosine residues by activated PDGFRB. In terms of tissue distribution, expressed in astrocytes and glioma cells.

The protein resides in the cytoplasm. Its subcellular location is the cytosol. The protein localises to the melanosome. It is found in the cytoskeleton. It localises to the microtubule organizing center. The protein resides in the centrosome. Its subcellular location is the secreted. The protein localises to the extracellular exosome. It is found in the cell junction. It localises to the tight junction. The protein resides in the midbody. Its subcellular location is the midbody ring. Functionally, multifunctional protein involved in endocytosis, multivesicular body biogenesis, membrane repair, cytokinesis, apoptosis and maintenance of tight junction integrity. Class E VPS protein involved in concentration and sorting of cargo proteins of the multivesicular body (MVB) for incorporation into intralumenal vesicles (ILVs) that are generated by invagination and scission from the limiting membrane of the endosome. Binds to the phospholipid lysobisphosphatidic acid (LBPA) which is abundant in MVBs internal membranes. The MVB pathway requires the sequential function of ESCRT-O, -I,-II and -III complexes. The ESCRT machinery also functions in topologically equivalent membrane fission events, such as the terminal stages of cytokinesis. Adapter for a subset of ESCRT-III proteins, such as CHMP4, to function at distinct membranes. Required for completion of cytokinesis. May play a role in the regulation of both apoptosis and cell proliferation. Regulates exosome biogenesis in concert with SDC1/4 and SDCBP. By interacting with F-actin, PARD3 and TJP1 secures the proper assembly and positioning of actomyosin-tight junction complex at the apical sides of adjacent epithelial cells that defines a spatial membrane domain essential for the maintenance of epithelial cell polarity and barrier. This Rattus norvegicus (Rat) protein is Programmed cell death 6-interacting protein.